The following is a 492-amino-acid chain: Transcription factor IIIB 60 kDa subunit (492 aa).

Residues 1–30 (MGCPNCGSTTFESDTASGNTYCTQCGVVVE) form a TFIIB-type zinc finger. Cysteine 3, cysteine 6, cysteine 22, and cysteine 25 together coordinate Zn(2+). The segment at 440–468 (QPRKRRRYRPRDSTSDGIADTAAESAKEM) is disordered.

Belongs to the TFIIB family. TFIIIB comprises the TATA-binding protein (TBP), the B-related factor (BRF) and a third subunit (Potential). Interacts with maf1.

Its subcellular location is the nucleus. General activator of RNA polymerase III transcription. This is Transcription factor IIIB 60 kDa subunit (brf1) from Schizosaccharomyces pombe (strain 972 / ATCC 24843) (Fission yeast).